A 130-amino-acid chain; its full sequence is Small ribosomal subunit protein uS8 (130 aa).

Belongs to the universal ribosomal protein uS8 family. In terms of assembly, part of the 30S ribosomal subunit. Contacts proteins S5 and S12.

One of the primary rRNA binding proteins, it binds directly to 16S rRNA central domain where it helps coordinate assembly of the platform of the 30S subunit. This is Small ribosomal subunit protein uS8 from Vibrio parahaemolyticus serotype O3:K6 (strain RIMD 2210633).